Reading from the N-terminus, the 249-residue chain is Triosephosphate isomerase (249 aa).

Substrate is bound at residue 9 to 11; the sequence is NWK. The active-site Electrophile is His-95. Glu-166 functions as the Proton acceptor in the catalytic mechanism. Substrate-binding positions include Gly-172, Ser-211, and 232–233; that span reads GG.

It belongs to the triosephosphate isomerase family. Homodimer.

It localises to the cytoplasm. The enzyme catalyses D-glyceraldehyde 3-phosphate = dihydroxyacetone phosphate. It functions in the pathway carbohydrate biosynthesis; gluconeogenesis. The protein operates within carbohydrate degradation; glycolysis; D-glyceraldehyde 3-phosphate from glycerone phosphate: step 1/1. Involved in the gluconeogenesis. Catalyzes stereospecifically the conversion of dihydroxyacetone phosphate (DHAP) to D-glyceraldehyde-3-phosphate (G3P). The protein is Triosephosphate isomerase of Legionella pneumophila subsp. pneumophila (strain Philadelphia 1 / ATCC 33152 / DSM 7513).